The following is a 147-amino-acid chain: Endothelial differentiation-related factor 1 homolog (147 aa).

A disordered region spans residues 1–69 (MAESDWDTVT…KLDRETEELH (69 aa)). Over residues 33-42 (RRGEEVETSK) the composition is skewed to basic and acidic residues. A compositionally biased stretch (polar residues) spans 46-58 (AGQNKQHTITRNT). A compositionally biased stretch (basic and acidic residues) spans 59–69 (AKLDRETEELH). In terms of domain architecture, HTH cro/C1-type spans 81-135 (IQQGRQGKGMTQKDLATKINEKPQVIADYECGKAIPNNQVMGKIERVIGLKLRGK). Residues 92–111 (QKDLATKINEKPQVIADYEC) constitute a DNA-binding region (H-T-H motif).

It localises to the nucleus. In terms of biological role, probable transcriptional coactivator. The sequence is that of Endothelial differentiation-related factor 1 homolog (edf1) from Xenopus laevis (African clawed frog).